A 635-amino-acid polypeptide reads, in one-letter code: Threonine--tRNA ligase (635 aa).

The 61-residue stretch at 1-61 (MINISFPDGS…DNDCRLRILT (61 aa)) folds into the TGS domain. The interval 242–533 (DHRKLGKELD…LIEEYAGRFP (292 aa)) is catalytic. Zn(2+)-binding residues include cysteine 333, histidine 384, and histidine 510.

This sequence belongs to the class-II aminoacyl-tRNA synthetase family. In terms of assembly, homodimer. Requires Zn(2+) as cofactor.

It is found in the cytoplasm. The enzyme catalyses tRNA(Thr) + L-threonine + ATP = L-threonyl-tRNA(Thr) + AMP + diphosphate + H(+). Catalyzes the attachment of threonine to tRNA(Thr) in a two-step reaction: L-threonine is first activated by ATP to form Thr-AMP and then transferred to the acceptor end of tRNA(Thr). Also edits incorrectly charged L-seryl-tRNA(Thr). This chain is Threonine--tRNA ligase, found in Rickettsia bellii (strain RML369-C).